Here is a 125-residue protein sequence, read N- to C-terminus: DNA-directed RNA polymerase subunit omega (125 aa).

Belongs to the RNA polymerase subunit omega family. As to quaternary structure, the RNAP catalytic core consists of 2 alpha, 1 beta, 1 beta' and 1 omega subunit. When a sigma factor is associated with the core the holoenzyme is formed, which can initiate transcription.

It catalyses the reaction RNA(n) + a ribonucleoside 5'-triphosphate = RNA(n+1) + diphosphate. In terms of biological role, promotes RNA polymerase assembly. Latches the N- and C-terminal regions of the beta' subunit thereby facilitating its interaction with the beta and alpha subunits. This Zymomonas mobilis subsp. mobilis (strain ATCC 31821 / ZM4 / CP4) protein is DNA-directed RNA polymerase subunit omega.